Consider the following 459-residue polypeptide: Bifunctional protein GlmU (459 aa).

Residues 1–229 form a pyrophosphorylase region; sequence MSNFAIILAA…FDESLGVNDR (229 aa). UDP-N-acetyl-alpha-D-glucosamine contacts are provided by residues 8-11, K22, Q72, and 77-78; these read LAAG and GT. A Mg(2+)-binding site is contributed by D102. Residues G139, E154, N169, and N227 each contribute to the UDP-N-acetyl-alpha-D-glucosamine site. N227 serves as a coordination point for Mg(2+). Residues 230–250 are linker; sequence VALATAESVMRRRINHKHMVN. Residues 251–459 form an N-acetyltransferase region; the sequence is GVSFVNPEAT…TRLPHHPKNQ (209 aa). Residues R332 and K350 each coordinate UDP-N-acetyl-alpha-D-glucosamine. H362 functions as the Proton acceptor in the catalytic mechanism. Residues Y365 and N376 each coordinate UDP-N-acetyl-alpha-D-glucosamine. Acetyl-CoA-binding positions include A379, 385–386, S404, A422, and R439; that span reads NY.

It in the N-terminal section; belongs to the N-acetylglucosamine-1-phosphate uridyltransferase family. The protein in the C-terminal section; belongs to the transferase hexapeptide repeat family. In terms of assembly, homotrimer. Mg(2+) serves as cofactor.

It is found in the cytoplasm. The catalysed reaction is alpha-D-glucosamine 1-phosphate + acetyl-CoA = N-acetyl-alpha-D-glucosamine 1-phosphate + CoA + H(+). It catalyses the reaction N-acetyl-alpha-D-glucosamine 1-phosphate + UTP + H(+) = UDP-N-acetyl-alpha-D-glucosamine + diphosphate. Its pathway is nucleotide-sugar biosynthesis; UDP-N-acetyl-alpha-D-glucosamine biosynthesis; N-acetyl-alpha-D-glucosamine 1-phosphate from alpha-D-glucosamine 6-phosphate (route II): step 2/2. The protein operates within nucleotide-sugar biosynthesis; UDP-N-acetyl-alpha-D-glucosamine biosynthesis; UDP-N-acetyl-alpha-D-glucosamine from N-acetyl-alpha-D-glucosamine 1-phosphate: step 1/1. It participates in bacterial outer membrane biogenesis; LPS lipid A biosynthesis. Functionally, catalyzes the last two sequential reactions in the de novo biosynthetic pathway for UDP-N-acetylglucosamine (UDP-GlcNAc). The C-terminal domain catalyzes the transfer of acetyl group from acetyl coenzyme A to glucosamine-1-phosphate (GlcN-1-P) to produce N-acetylglucosamine-1-phosphate (GlcNAc-1-P), which is converted into UDP-GlcNAc by the transfer of uridine 5-monophosphate (from uridine 5-triphosphate), a reaction catalyzed by the N-terminal domain. The protein is Bifunctional protein GlmU of Streptococcus pneumoniae (strain 70585).